The primary structure comprises 254 residues: PF03932 family protein CutC (254 aa).

The protein belongs to the CutC family.

Its subcellular location is the cytoplasm. The sequence is that of PF03932 family protein CutC from Yersinia pseudotuberculosis serotype I (strain IP32953).